The chain runs to 373 residues: Probable G-protein coupled receptor 173 (373 aa).

The Extracellular portion of the chain corresponds to 1–26 (MANTTGEPEEVSGALSLPSASAYVKL). Residue Asn3 is glycosylated (N-linked (GlcNAc...) asparagine). Residues 27 to 47 (VLLGLIMCVSLAGNAILSLLV) form a helical membrane-spanning segment. Topologically, residues 48–59 (LKERALHKAPYY) are cytoplasmic. The chain crosses the membrane as a helical span at residues 60-80 (FLLDLCLADGIRSAICFPFVL). The Extracellular portion of the chain corresponds to 81 to 97 (ASVRHGSSWTFSALSCK). Cys96 and Cys174 are disulfide-bonded. The chain crosses the membrane as a helical span at residues 98 to 118 (IVAFMAVLFCFHAAFMLFCIS). The Cytoplasmic portion of the chain corresponds to 119 to 139 (VTRYMAIAHHRFYAKRMTLWT). The chain crosses the membrane as a helical span at residues 140-160 (CAAVICMAWTLSVAMAFPPVF). At 161–188 (DVGTYKFIREEDQCIFEHRYFKANDTLG) the chain is on the extracellular side. N-linked (GlcNAc...) asparagine glycosylation is present at Asn184. Residues 189-209 (FMLMLAVLMAATHAVYGKLLL) form a helical membrane-spanning segment. The Cytoplasmic segment spans residues 210–287 (FEYRHRKMKP…VKGEKQLGRM (78 aa)). Residues 288 to 308 (FYAITLLFLLLWSPYIVACYW) form a helical membrane-spanning segment. The Extracellular portion of the chain corresponds to 309-322 (RVFVKACAVPHRYL). A helical membrane pass occupies residues 323 to 343 (ATAVWMSFAQAAVNPIVCFLL). Residues 344-373 (NKDLKKCLRTHAPCWGTGGAPAPREPYCVM) are Cytoplasmic-facing.

The protein belongs to the G-protein coupled receptor 1 family. Expressed in the ovary, specifically in granulosa cells of follicles that have passed the primary stage and in oocytes (at protein level). Expressed in preadipocytes.

The protein localises to the cell membrane. Its function is as follows. Is a receptor for the SMIM20 derived peptides Phoenixin-14 and Phoenixin-20. It mediates the Phoenixin-14 and Phoenixin-20 augmentation of gonadotropin-releasing hormone (GNRH) signaling in the hypothalamus and pituitary gland. In the ovary, it mediates the effects of Phoenixin-14 and Phoenixin-20 induced granulosa cell proliferation during follicular growth. The protein is Probable G-protein coupled receptor 173 (Gpr173) of Mus musculus (Mouse).